We begin with the raw amino-acid sequence, 167 residues long: Transcription antitermination protein NusB (167 aa).

It belongs to the NusB family.

Its function is as follows. Involved in transcription antitermination. Required for transcription of ribosomal RNA (rRNA) genes. Binds specifically to the boxA antiterminator sequence of the ribosomal RNA (rrn) operons. The protein is Transcription antitermination protein NusB of Nitrosomonas europaea (strain ATCC 19718 / CIP 103999 / KCTC 2705 / NBRC 14298).